The chain runs to 182 residues: Interferon beta (182 aa).

The signal sequence occupies residues 1 to 21 (MNNRWILHAAFLLCFSTTALS). Residue Tyr24 is modified to Phosphotyrosine. N-linked (GlcNAc...) asparagine glycans are attached at residues Asn50, Asn90, and Asn97.

The protein belongs to the alpha/beta interferon family. As to quaternary structure, monomer. Post-translationally, this beta interferon does not have a disulfide bond.

It localises to the secreted. Its function is as follows. Type I interferon cytokine that plays a key role in the innate immune response to infection, developing tumors and other inflammatory stimuli. Signals via binding to high-affinity (IFNAR2) and low-affinity (IFNAR1) heterodimeric receptor, activating the canonical Jak-STAT signaling pathway resulting in transcriptional activation or repression of interferon-regulated genes that encode the effectors of the interferon response, such as antiviral proteins, regulators of cell proliferation and differentiation, and immunoregulatory proteins. Signals mostly via binding to a IFNAR1-IFNAR2 heterodimeric receptor, but can also function with IFNAR1 alone and independently of Jak-STAT pathways. Elicits a wide variety of responses, including antiviral and antibacterial activities, and can regulate the development of B-cells, myelopoiesis and lipopolysaccharide (LPS)-inducible production of tumor necrosis factor. Plays a role in neuronal homeostasis by regulating dopamine turnover and protecting dopaminergic neurons: acts by promoting neuronal autophagy and alpha-synuclein clearance, thereby preventing dopaminergic neuron loss. IFNB1 is more potent than interferon-alpha (IFN-alpha) in inducing the apoptotic and antiproliferative pathways required for control of tumor cell growth. This is Interferon beta from Mus musculus (Mouse).